We begin with the raw amino-acid sequence, 335 residues long: Adenine deaminase (335 aa).

Residues H17, H19, and H197 each coordinate Zn(2+). Residue E200 is the Proton donor of the active site. D278 provides a ligand contact to Zn(2+). Substrate is bound at residue D279.

The protein belongs to the metallo-dependent hydrolases superfamily. Adenosine and AMP deaminases family. Adenine deaminase type 2 subfamily. Zn(2+) serves as cofactor.

The catalysed reaction is adenine + H2O + H(+) = hypoxanthine + NH4(+). In terms of biological role, catalyzes the hydrolytic deamination of adenine to hypoxanthine. Plays an important role in the purine salvage pathway and in nitrogen catabolism. This is Adenine deaminase from Marinomonas sp. (strain MWYL1).